The sequence spans 734 residues: Sulfate transporter (734 aa).

Polar residues predominate over residues 1–11; it reads MSLKNGEQNDL. Residues 1 to 38 are disordered; sequence MSLKNGEQNDLSPKDSVKGNDQYRSPSGIHVEHEEESR. Phosphoserine is present on residues Ser-12 and Ser-16. 2 helical membrane passes run 113–133 and 138–158; these read MMSG…YSLL and PIYG…LGTS. Residues Asn-194 and Asn-204 are each glycosylated (N-linked (GlcNAc...) asparagine). A run of 8 helical transmembrane segments spans residues 222–242, 247–267, 269–289, 292–312, 379–399, 415–435, 453–473, and 519–539; these read FVAG…VSVY, LLGG…VKYL, GLSL…IHIF, IHKT…VLLP, VDAI…SEMF, AIGF…SAAL, VMTA…FFSL, and LIST…CVIL. The 152-residue stretch at 563-714 folds into the STAS domain; it reads AYKNLQAKSG…YSVYEAMTFA (152 aa).

It belongs to the SLC26A/SulP transporter (TC 2.A.53) family. N-glycosylated.

Its subcellular location is the cell membrane. It localises to the apical cell membrane. It carries out the reaction oxalate(in) + sulfate(out) = oxalate(out) + sulfate(in). It catalyses the reaction sulfate(out) + 2 chloride(in) = sulfate(in) + 2 chloride(out). The catalysed reaction is oxalate(out) + 2 chloride(in) = oxalate(in) + 2 chloride(out). The enzyme catalyses bromide(in) + chloride(out) = bromide(out) + chloride(in). It carries out the reaction nitrate(in) + chloride(out) = nitrate(out) + chloride(in). It catalyses the reaction iodide(in) + chloride(out) = iodide(out) + chloride(in). Functionally, sulfate transporter which mediates sulfate uptake into chondrocytes in order to maintain adequate sulfation of proteoglycans which is needed for cartilage development. Mediates electroneutral anion exchange of sulfate ions for oxalate ions, sulfate and oxalate ions for chloride and/or hydroxyl ions and chloride ions for bromide, iodide and nitrate ions. The coupling of sulfate transport to both hydroxyl and chloride ions likely serves to ensure transport at both acidic pH when most sulfate uptake is mediated by sulfate-hydroxide exchange and alkaline pH when most sulfate uptake is mediated by sulfate-chloride exchange. Essential for chondrocyte proliferation, differentiation and cell size expansion. The sequence is that of Sulfate transporter (SLC26A2) from Ovis aries (Sheep).